The following is a 304-amino-acid chain: Putative metal ion transporter ZIPCO (304 aa).

Helical transmembrane passes span 1-21 (MWLKLILAIVILIECIVVIYL), 46-66 (VASGAILALAFIHMLPEVIGL), 74-94 (IYCCFGLILISVTFLNITDIL), 158-178 (FFIVLSLFIHSFVEGLLIGSL), 183-203 (PIIIVGLSMIAHKWAECLMIY), 218-238 (IYAWSFILSLPLGILVAVLSF), 243-263 (FVEIIFSSIACGFFLYLSFNM), and 275-295 (FYISFSYFFGVCGMSTLMIVF).

It localises to the cell membrane. Functionally, putative transporter for the divalent zinc and iron cations. Required for the development of liver-stage parasites. This Plasmodium berghei (strain Anka) protein is Putative metal ion transporter ZIPCO.